The following is a 461-amino-acid chain: Signal recognition particle receptor FtsY (461 aa).

One copy of the TPR repeat lies at 105 to 138; that stretch reads FESLYNVAKIYHQLEKPDKALEYAQRAEKLVPYE. Residues 267 to 274, 349 to 353, and 413 to 416 each bind GTP; these read GVNGSGKT, DTAGR, and TKLD.

This sequence belongs to the GTP-binding SRP family. FtsY subfamily. In terms of assembly, part of the signal recognition particle protein translocation system, which is composed of SRP and FtsY.

It localises to the cell inner membrane. The protein resides in the cytoplasm. The catalysed reaction is GTP + H2O = GDP + phosphate + H(+). Functionally, involved in targeting and insertion of nascent membrane proteins into the cytoplasmic membrane. Acts as a receptor for the complex formed by the signal recognition particle (SRP) and the ribosome-nascent chain (RNC). This chain is Signal recognition particle receptor FtsY, found in Aquifex aeolicus (strain VF5).